We begin with the raw amino-acid sequence, 162 residues long: MSTNPKPQKKKTNVTPTVAHRTSSSRVAVRSLVEFTCCRAGALDWVCARRERLPSGRNLEVDVSLSPRLVGPRAGPGLSPGTLGPSMAMRAAGGRDGSCLPVALGLAGAPQTPGVGRAIWVRSSIPLRAASPTSWGTYRSSAPLLEALPGPWRMASGFWKTA.

The tract at residues 1 to 23 is disordered; sequence MSTNPKPQKKKTNVTPTVAHRTS. Positions 13-23 are enriched in polar residues; that stretch reads NVTPTVAHRTS.

The protein localises to the host cytoplasm. Its subcellular location is the host perinuclear region. The chain is F protein from Hepatitis C virus genotype 1a (isolate 1) (HCV).